An 853-amino-acid polypeptide reads, in one-letter code: ATP-dependent zinc metalloprotease FtsH (853 aa).

Topologically, residues 1–5 are cytoplasmic; that stretch reads MKNKK. A helical transmembrane segment spans residues 6–26; the sequence is YLQFGGIAAVILIVLFLVSLF. At 27–113 the chain is on the extracellular side; that stretch reads SSDTRNFQEV…SYTTNVTQES (87 aa). The helical transmembrane segment at 114–134 threads the bilayer; it reads FLMSMLSFILPMVIIFGLLMF. Topologically, residues 135–853 are cytoplasmic; that stretch reads FLTRMQGGGM…NPENEGDNRG (719 aa). 205–212 contacts ATP; sequence GPPGTGKT. His-427 serves as a coordination point for Zn(2+). Residue Glu-428 is part of the active site. His-431 and Asp-503 together coordinate Zn(2+). Composition is skewed to basic and acidic residues over residues 619-632 and 639-648; these read ESTR…REPV and ALERGEEPPK. Residues 619–853 are disordered; that stretch reads ESTRFPRQEN…NPENEGDNRG (235 aa). Over residues 677–695 the composition is skewed to low complexity; sequence PASSAGVAPAAGAAAGSYG. Polar residues-rich tracts occupy residues 728–739 and 770–788; these read TPAQAPEQSPDS and MDQS…QESP. The span at 796–813 shows a compositional bias: basic and acidic residues; that stretch reads LPDHERSDYPEKAQKESV.

The protein in the central section; belongs to the AAA ATPase family. This sequence in the C-terminal section; belongs to the peptidase M41 family. As to quaternary structure, homohexamer. It depends on Zn(2+) as a cofactor.

Its subcellular location is the cell membrane. Its function is as follows. Acts as a processive, ATP-dependent zinc metallopeptidase for both cytoplasmic and membrane proteins. Plays a role in the quality control of integral membrane proteins. The sequence is that of ATP-dependent zinc metalloprotease FtsH from Corynebacterium glutamicum (strain ATCC 13032 / DSM 20300 / JCM 1318 / BCRC 11384 / CCUG 27702 / LMG 3730 / NBRC 12168 / NCIMB 10025 / NRRL B-2784 / 534).